Consider the following 414-residue polypeptide: V-set and immunoglobulin domain-containing protein 8 (414 aa).

The first 21 residues, 1–21 (MRVGGAFHLLLVCLSPALLSA), serve as a signal peptide directing secretion. Ig-like V-type domains are found at residues 22–141 (VRIN…VIVT) and 146–257 (PAVP…VKVS). Residues 22-263 (VRINGDGQEV…VKVSDSRRIG (242 aa)) are Extracellular-facing. Intrachain disulfides connect cysteine 44–cysteine 126 and cysteine 167–cysteine 239. Residues 264 to 284 (VIIGIVLGSLLALGCLAVGIW) traverse the membrane as a helical segment. Residues 285–414 (GLVCCCCGGS…PVQCKNGLLV (130 aa)) are Cytoplasmic-facing.

The protein resides in the membrane. In Homo sapiens (Human), this protein is V-set and immunoglobulin domain-containing protein 8.